The primary structure comprises 151 residues: F-box protein GID2 (151 aa).

The span at 1–25 (MKRSTTDSDLAGDAHNETNKKMKST) shows a compositional bias: basic and acidic residues. The tract at residues 1-27 (MKRSTTDSDLAGDAHNETNKKMKSTEE) is disordered. Positions 29–75 (EIGFSNLDENLVYEVLKHVDAKTLAMSSCVSKIWHKTAQDERLWELI) constitute an F-box domain.

In terms of assembly, part of some SCF(GID2) complex, which consist of SKP1B, CUL1 cullin, GID2/SLY1 and some RING box protein. Interacts directly with SKP1A and SKP1B. Interacts directly with DELLA proteins GAI, RGA, RGL1, RGL3 and probably RGL2. May have a higher affinity for phosphorylated DELLA proteins. As to expression, expressed in all tissues tested, including rosette leaves, green siliques, flowers, stems, cauline leaves and seedlings.

The protein resides in the nucleus. Its pathway is protein modification; protein ubiquitination. In terms of biological role, essential component of the SCF-type E3 ligase complex, SCF(GID2), a complex that positively regulates the gibberellin signaling pathway. Upon gibberellin treatment, the SCF(GID2) complex mediates the ubiquitination and subsequent degradation of DELLA proteins (GAI, RGA and RGL2), some repressors of the gibberellin pathway, leading to activate the pathway. The chain is F-box protein GID2 (GID2) from Arabidopsis thaliana (Mouse-ear cress).